The following is a 548-amino-acid chain: Membrane protein insertase YidC (548 aa).

Residues 6-26 (NLFLIAFLFVSFMIWQAWQTD) form a helical membrane-spanning segment. The interval 30–53 (QPLQTQTTQNTTSAAGDAVNQGVP) is disordered. Transmembrane regions (helical) follow at residues 345–365 (KFLHGFIGNWGFSIIVITFIV), 420–440 (LGGCLPLVIQMPIFLALYYML), 458–478 (LAAQDPYYILPILMGVTMFFI), and 499–519 (PVIFTVFFLWFPSGLVLYYIV).

The protein belongs to the OXA1/ALB3/YidC family. Type 1 subfamily. Interacts with the Sec translocase complex via SecD. Specifically interacts with transmembrane segments of nascent integral membrane proteins during membrane integration.

It localises to the cell inner membrane. Required for the insertion and/or proper folding and/or complex formation of integral membrane proteins into the membrane. Involved in integration of membrane proteins that insert both dependently and independently of the Sec translocase complex, as well as at least some lipoproteins. Aids folding of multispanning membrane proteins. In Erwinia tasmaniensis (strain DSM 17950 / CFBP 7177 / CIP 109463 / NCPPB 4357 / Et1/99), this protein is Membrane protein insertase YidC.